A 138-amino-acid chain; its full sequence is Bis(5'-nucleosyl)-tetraphosphatase [asymmetrical] (138 aa).

The Nudix hydrolase domain maps to 1 to 132; it reads MVVKAAGLVI…EMGSLLRKFS (132 aa). Positions 37-58 match the Nudix box motif; it reads GHVDPGEDEWQAAIRETKEEAN.

This sequence belongs to the Nudix hydrolase family. As to quaternary structure, monomer. The cofactor is Mg(2+). It depends on Co(2+) as a cofactor. Mn(2+) serves as cofactor. Zn(2+) is required as a cofactor. Requires Ca(2+) as cofactor.

The enzyme catalyses P(1),P(4)-bis(5'-adenosyl) tetraphosphate + H2O = AMP + ATP + 2 H(+). Asymmetrically hydrolyzes Ap4A to yield AMP and ATP. This Caenorhabditis elegans protein is Bis(5'-nucleosyl)-tetraphosphatase [asymmetrical] (ndx-4).